A 127-amino-acid chain; its full sequence is Protein ApaG (127 aa).

The ApaG domain maps to 3–127; that stretch reads DTNKYRIEVQ…FVLASPRALH (125 aa).

This is Protein ApaG from Dechloromonas aromatica (strain RCB).